Here is a 786-residue protein sequence, read N- to C-terminus: Endonuclease MutS2 (786 aa).

335–342 (GPNTGGKT) provides a ligand contact to ATP. One can recognise a Smr domain in the interval 711–786 (LDLRGERFEN…GLGVTVVELK (76 aa)).

The protein belongs to the DNA mismatch repair MutS family. MutS2 subfamily. As to quaternary structure, homodimer. Binds to stalled ribosomes, contacting rRNA.

Its function is as follows. Endonuclease that is involved in the suppression of homologous recombination and thus may have a key role in the control of bacterial genetic diversity. In terms of biological role, acts as a ribosome collision sensor, splitting the ribosome into its 2 subunits. Detects stalled/collided 70S ribosomes which it binds and splits by an ATP-hydrolysis driven conformational change. Acts upstream of the ribosome quality control system (RQC), a ribosome-associated complex that mediates the extraction of incompletely synthesized nascent chains from stalled ribosomes and their subsequent degradation. Probably generates substrates for RQC. This chain is Endonuclease MutS2, found in Bacillus cereus (strain B4264).